The following is a 609-amino-acid chain: Heat shock factor protein (609 aa).

The span at 1–33 (MIQTASTISSNGGTNQGMESSSANSPEMNGTQN) shows a compositional bias: polar residues. Residues 1–47 (MIQTASTISSNGGTNQGMESSSANSPEMNGTQNSMSVGMSGSGSSQN) form a disordered region. The span at 34 to 45 (SMSVGMSGSGSS) shows a compositional bias: low complexity. A DNA-binding region spans residues 50 to 156 (ITQFSNKLYN…LLCLVTRKKA (107 aa)). Disordered regions lie at residues 255–298 (PTVS…GKYR), 310–371 (SSFN…TDPK), 411–445 (NNTSSEQHHNSYRGSVSNSQPSGNLSESTNLQPVQ), and 567–609 (SNGN…SIGA). Composition is skewed to polar residues over residues 257 to 277 (VSPTNEPSAHSRPSPQGTTAN), 339 to 360 (DSFNNSIDSYISPNQSPNTDVP), 422 to 443 (YRGSVSNSQPSGNLSESTNLQP), and 567 to 597 (SNGNTFGSNPVSLPNQQKSVNPSLMTVSSPR). A Phosphoserine modification is found at Ser-350. Basic residues predominate over residues 598–609 (QVRKKRKSSIGA).

This sequence belongs to the HSF family. As to quaternary structure, homotrimer.

The protein resides in the nucleus. DNA-binding protein that specifically binds heat shock promoter elements (HSE) and activates transcription. Also required for growth at normal temperatures. This is Heat shock factor protein (hsf1) from Schizosaccharomyces pombe (strain 972 / ATCC 24843) (Fission yeast).